Reading from the N-terminus, the 668-residue chain is Potassium voltage-gated channel subfamily KQT member 1 (668 aa).

The Cytoplasmic portion of the chain corresponds to 1–119 (MDTASSPPSA…YNFLERPTGW (119 aa)). Ser-27 carries the post-translational modification Phosphoserine; by PKA. The helical transmembrane segment at 120-141 (KCFVYHFTVFLIVLVCLIFSVL) threads the bilayer. Over 142–152 (STIEQYAALAT) the chain is Extracellular. Residues 153–175 (GTLFWMEIVLVVFFGTEYVVRLW) traverse the membrane as a helical segment. Residues 176–191 (SAGCRSKYVGIWGRLR) are Cytoplasmic-facing. Residues 192–217 (FARKPISIIDLIVVVASMVVLCVGSK) form a helical membrane-spanning segment. At 218–225 (GQVFATSA) the chain is on the extracellular side. A helical; Voltage-sensor transmembrane segment spans residues 226-241 (IRGIRFLQILRMLHVD). An interaction with KCNE3 region spans residues 237–245 (MLHVDRQGG). The Cytoplasmic segment spans residues 242–259 (RQGGTWRLLGSVVFIHRQ). A 1,2-diacyl-sn-glycero-3-phospho-(1D-myo-inositol-4,5-bisphosphate) is bound at residue Gln-243. A helical membrane pass occupies residues 260-282 (ELITTLYIGFLGLIFSSYFVYLA). Residues 283 to 298 (EKDAVNESGRIEFGSY) lie on the Extracellular side of the membrane. N-linked (GlcNAc...) asparagine glycosylation is present at Asn-288. Residues 299–319 (ADALWWGVVTVTTIGYGDKVP) constitute an intramembrane region (pore-forming). Residues 320-321 (QT) lie on the Extracellular side of the membrane. Residues 322-347 (WVGKTIASCFSVFAISFFALPAGILG) traverse the membrane as a helical segment. Topologically, residues 348-668 (SGFALKVQQK…VPQTGPDEGS (321 aa)) are cytoplasmic. The interval 369–381 (AAASLIQTAWRCY) is interaction with CALM. Phosphoserine is present on residues Ser-406 and Ser-408. Positions 514–528 (KVIRRMQYFVAKKKF) are interaction with CALM; calcium-dependent. An interaction with KCNE1 C-terminus region spans residues 534–571 (PYDVRDVIEQYSQGHLNLMVRIKELQRRLDQSIGKPSL). A coiled-coil region spans residues 584 to 620 (SNTIGARLNRVEDKVTQLDQRLVIITDMLHQLLSMQQ). The segment at 587–615 (IGARLNRVEDKVTQLDQRLVIITDMLHQL) is interaction with AKAP9. A C-terminal assembly domain (tetramerization) region spans residues 588 to 619 (GARLNRVEDKVTQLDQRLVIITDMLHQLLSMQ).

It belongs to the potassium channel family. KQT (TC 1.A.1.15) subfamily. Kv7.1/KCNQ1 sub-subfamily. Tetramer. Heterotetramer with KCNE1; form the native cardiac channel I(Ks) which increases the amplitude and slows down the activation kinetics of outward potassium current and targets to the membrane raft. Interacts (via C-terminus) with CALM; forms a heterooctameric structure (with 4:4 KCNQ1:CALM stoichiometry) in a calcium-independent manner. Interacts with AKAP9; targets protein kinase A (PKA) catalytic and regulatory subunits and protein phosphatase 1 (PP1) to the KCNQ1-KCNE1 complex, allowing PKA-mediated phosphorylation and increase of delayed rectifier potassium channel activity. Interacts with KCNE2; form an heterooligomer complex that targets to the membrane raft and leading to currents with an apparently instantaneous activation, a rapid deactivation process and a linear current-voltage relationship and decreases the amplitude of the outward current. Interacts with AP2M1; mediates estrogen-induced internalization via clathrin-coated vesicles. Interacts with NEDD4L; promotes internalization and decreases I(Ks) currents. Interacts with USP2; counteracts the NEDD4L-specific down-regulation of I(Ks) and restore plasma membrane localization. Heterotetramer with KCNQ5; has a voltage-gated potassium channel activity. Interacts with KCNE3; four KCNE3 molecules are bound to one KCNQ1 tetramer (4:4 KCNQ1:KCNE3 stoichiometry); alters membrane raft localization; affects KCNQ1 structure and gating properties. Interacts with KCNE4; impairs KCNQ1 localization in lipid rafts and inhibits voltage-gated potassium channel activity. Interacts with KCNE5; impairs KCNQ1 localization in lipid rafts and only conducts current upon strong and continued depolarization. Interacts with SLC5A3; forms coregulatory channel-transporter complexes that modulate Na(+)-coupled myo-inositol influx through the transporter. Post-translationally, phosphorylation at Ser-27 by PKA; increases delayed rectifier potassium channel activity of the KCNQ1-KCNE1 complex through a macromolecular complex that includes PKA, PP1, and the targeting protein AKAP9. Ubiquitinated by NEDD4L; promotes internalization. The ubiquitinylated form is internalized through a clathrin-mediated endocytosis by interacting with AP2M1 and is recycled back to the cell membrane via RAB4A and RAB11A. In terms of processing, deubiquitinated by USP2; counteracts the NEDD4L-specific down-regulation of I(Ks) and restores the membrane localization. In terms of tissue distribution, expressed in heart, kidney and salivary glands. Detected in the cochlea. Almost undetectable in brain, skeletal muscle and liver. Widely expressed in embryonic and neonatal tissues. Expressed in choroid plexus epithelium (at protein level).

The protein localises to the cell membrane. Its subcellular location is the cytoplasmic vesicle membrane. The protein resides in the early endosome. It is found in the membrane raft. It localises to the endoplasmic reticulum. The protein localises to the basolateral cell membrane. Its subcellular location is the apical cell membrane. The enzyme catalyses K(+)(in) = K(+)(out). Its activity is regulated as follows. PIP2 molecule is essential to activate KCNQ channels by inducing the coupling of the voltage-sensing domain (VSD) and the pore-forming domain (PD). Upon channel activation, PIP2 disrupts the VSD-calmodulin/CALM interactions, causing the release of CALM from the VSD which triggers the opening of the gate. Calcium potentiates KCNQ1 channel current through calcium-bound CALM. Calcium-bound CALM competes with PIP2 to stabilize the channel open state. In terms of biological role, pore-forming subunit of the voltage-gated potassium (Kv) channel involved in the regulation of cardiomyocyte excitability and important in normal development and functions of myocardium, inner ear, stomach and colon. Associates with KCNE beta subunits that modulates current kinetics. Induces a voltage-dependent by rapidly activating and slowly deactivating potassium-selective outward current. Also promotes a delayed voltage activated potassium current showing outward rectification characteristic. During beta-adrenergic receptor stimulation participates in cardiac increases the amplitude and slows down the activation kinetics of outward potassium current I(Ks). Muscarinic agonist oxotremorine-M strongly suppresses KCNQ1/KCNE1 current. When associated with KCNE3, forms the potassium channel that is important for cyclic AMP-stimulated intestinal secretion of chloride ions. This interaction with KCNE3 is reduced by 17beta-estradiol, resulting in the reduction of currents. During conditions of increased substrate load, maintains the driving force for proximal tubular and intestinal sodium ions absorption, gastric acid secretion, and cAMP-induced jejunal chloride ions secretion. Allows the provision of potassium ions to the luminal membrane of the secretory canaliculus in the resting state as well as during stimulated acid secretion. When associated with KCNE2, forms a heterooligomer complex leading to currents with an apparently instantaneous activation, a rapid deactivation process and a linear current-voltage relationship and decreases the amplitude of the outward current. When associated with KCNE4, inhibits voltage-gated potassium channel activity. When associated with KCNE5, this complex only conducts current upon strong and continued depolarization. Also forms a heterotetramer with KCNQ5; has a voltage-gated potassium channel activity. Binds with phosphatidylinositol 4,5-bisphosphate. KCNQ1-KCNE2 channel associates with Na(+)-coupled myo-inositol symporter in the apical membrane of choroid plexus epithelium and regulates the myo-inositol gradient between blood and cerebrospinal fluid with an impact on neuron excitability. In Mus musculus (Mouse), this protein is Potassium voltage-gated channel subfamily KQT member 1.